We begin with the raw amino-acid sequence, 424 residues long: 3-isopropylmalate dehydratase large subunit 1 (424 aa).

Residues Cys303, Cys363, and Cys366 each contribute to the [4Fe-4S] cluster site.

Belongs to the aconitase/IPM isomerase family. LeuC type 2 subfamily. As to quaternary structure, heterodimer of LeuC and LeuD. The cofactor is [4Fe-4S] cluster.

It carries out the reaction (2R,3S)-3-isopropylmalate = (2S)-2-isopropylmalate. Its pathway is amino-acid biosynthesis; L-leucine biosynthesis; L-leucine from 3-methyl-2-oxobutanoate: step 2/4. Its function is as follows. Catalyzes the isomerization between 2-isopropylmalate and 3-isopropylmalate, via the formation of 2-isopropylmaleate. The polypeptide is 3-isopropylmalate dehydratase large subunit 1 (Pyrococcus furiosus (strain ATCC 43587 / DSM 3638 / JCM 8422 / Vc1)).